A 721-amino-acid chain; its full sequence is Polyribonucleotide nucleotidyltransferase (721 aa).

Residues D495 and D501 each contribute to the Mg(2+) site. Positions 562–621 (PRLLSFRIDPELIGTVIGPGGRTIKGITERTNTKIDIEDSGIVTIASHDGAAAEEAQKII) constitute a KH domain. In terms of domain architecture, S1 motif spans 631–699 (GEMFSGSITR…NRGRINLTLR (69 aa)). Positions 700-721 (GVPQSGESTEVEPQPTPVAPLS) are disordered.

This sequence belongs to the polyribonucleotide nucleotidyltransferase family. It depends on Mg(2+) as a cofactor.

The protein localises to the cytoplasm. It catalyses the reaction RNA(n+1) + phosphate = RNA(n) + a ribonucleoside 5'-diphosphate. Involved in mRNA degradation. Catalyzes the phosphorolysis of single-stranded polyribonucleotides processively in the 3'- to 5'-direction. The polypeptide is Polyribonucleotide nucleotidyltransferase (Synechococcus sp. (strain CC9902)).